The sequence spans 94 residues: Selenoprotein K (94 aa).

The helical transmembrane segment at 20–42 (LSLITDFFWGIAEFVVLFFKTLL) threads the bilayer. The disordered stretch occupies residues 47 to 94 (KKGRGYRNSSDSRYDDGRGPPGNPPRRMGRISHLHGPSPPPMAGGUGR). Residue selenocysteine 92 is a non-standard amino acid, selenocysteine.

Belongs to the selenoprotein K family. Interacts with DERL1, DERL2, DERL3 and SELENOS. The SELENOK-SELENOS complex interacts with VCP. Interacts with ZDHHC6. Cleaved by CAPN2/m-calpain in resting macrophages but not in activated macrophages. Macrophage activation up-regulates expression of the calpain inhibitor CAST/calpastatin, resulting in inhibition of CAPN2 activity. Post-translationally, truncated SELENOK proteins produced by failed UGA/Sec decoding are ubiquitinated by the CRL2(KLHDC2) complex, which recognizes the diglycine (Gly-Gly) at the C-terminus of truncated SELENOK proteins.

The protein localises to the endoplasmic reticulum membrane. It is found in the cell membrane. Functionally, required for Ca(2+) flux in immune cells and plays a role in T-cell proliferation and in T-cell and neutrophil migration. Involved in endoplasmic reticulum-associated degradation (ERAD) of soluble glycosylated proteins. Required for palmitoylation and cell surface expression of CD36 and involved in macrophage uptake of low-density lipoprotein and in foam cell formation. Together with ZDHHC6, required for palmitoylation of ITPR1 in immune cells, leading to regulate ITPR1 stability and function. Plays a role in protection of cells from ER stress-induced apoptosis. Protects cells from oxidative stress when overexpressed in cardiomyocytes. This Chinchilla lanigera (Long-tailed chinchilla) protein is Selenoprotein K.